We begin with the raw amino-acid sequence, 396 residues long: Ribosomal RNA large subunit methyltransferase I (396 aa).

The region spanning 2 to 81 (SVRLVLAKGR…ESIDIAFFSR (80 aa)) is the PUA domain.

The protein belongs to the methyltransferase superfamily. RlmI family.

It is found in the cytoplasm. It catalyses the reaction cytidine(1962) in 23S rRNA + S-adenosyl-L-methionine = 5-methylcytidine(1962) in 23S rRNA + S-adenosyl-L-homocysteine + H(+). Functionally, specifically methylates the cytosine at position 1962 (m5C1962) of 23S rRNA. The protein is Ribosomal RNA large subunit methyltransferase I of Shigella boydii serotype 4 (strain Sb227).